Here is a 185-residue protein sequence, read N- to C-terminus: Peptidyl-tRNA hydrolase (185 aa).

Tyrosine 14 is a binding site for tRNA. Histidine 19 (proton acceptor) is an active-site residue. Tyrosine 65, asparagine 67, and asparagine 113 together coordinate tRNA.

Belongs to the PTH family. Monomer.

Its subcellular location is the cytoplasm. The catalysed reaction is an N-acyl-L-alpha-aminoacyl-tRNA + H2O = an N-acyl-L-amino acid + a tRNA + H(+). In terms of biological role, hydrolyzes ribosome-free peptidyl-tRNAs (with 1 or more amino acids incorporated), which drop off the ribosome during protein synthesis, or as a result of ribosome stalling. Its function is as follows. Catalyzes the release of premature peptidyl moieties from peptidyl-tRNA molecules trapped in stalled 50S ribosomal subunits, and thus maintains levels of free tRNAs and 50S ribosomes. The chain is Peptidyl-tRNA hydrolase from Rickettsia prowazekii (strain Madrid E).